Here is a 116-residue protein sequence, read N- to C-terminus: Ribonuclease P protein component (116 aa).

Belongs to the RnpA family. As to quaternary structure, consists of a catalytic RNA component (M1 or rnpB) and a protein subunit.

The enzyme catalyses Endonucleolytic cleavage of RNA, removing 5'-extranucleotides from tRNA precursor.. Functionally, RNaseP catalyzes the removal of the 5'-leader sequence from pre-tRNA to produce the mature 5'-terminus. It can also cleave other RNA substrates such as 4.5S RNA. The protein component plays an auxiliary but essential role in vivo by binding to the 5'-leader sequence and broadening the substrate specificity of the ribozyme. This Geobacter sp. (strain M21) protein is Ribonuclease P protein component.